We begin with the raw amino-acid sequence, 511 residues long: Ribose import ATP-binding protein RbsA 3 (511 aa).

ABC transporter domains are found at residues 21 to 257 and 256 to 511; these read LEMR…VGRD and RDVE…TGNA. Residue 53-60 coordinates ATP; sequence GENGAGKS.

This sequence belongs to the ABC transporter superfamily. Ribose importer (TC 3.A.1.2.1) family. In terms of assembly, the complex is composed of an ATP-binding protein (RbsA), two transmembrane proteins (RbsC) and a solute-binding protein (RbsB).

It localises to the cell inner membrane. The enzyme catalyses D-ribose(out) + ATP + H2O = D-ribose(in) + ADP + phosphate + H(+). Its function is as follows. Part of the ABC transporter complex RbsABC involved in ribose import. Responsible for energy coupling to the transport system. This is Ribose import ATP-binding protein RbsA 3 from Rhizobium etli (strain ATCC 51251 / DSM 11541 / JCM 21823 / NBRC 15573 / CFN 42).